Consider the following 526-residue polypeptide: Acid-sensing ion channel 1 (526 aa).

Residues methionine 1 to cysteine 49 lie on the Cytoplasmic side of the membrane. Residues phenylalanine 50 to glutamine 66 form a helical membrane-spanning segment. The Extracellular segment spans residues tyrosine 67–glutamate 425. 7 disulfides stabilise this stretch: cysteine 93/cysteine 194, cysteine 172/cysteine 179, cysteine 290/cysteine 365, cysteine 308/cysteine 361, cysteine 312/cysteine 359, cysteine 321/cysteine 343, and cysteine 323/cysteine 335. 2 N-linked (GlcNAc...) asparagine glycosylation sites follow: asparagine 366 and asparagine 393. The discontinuously helical transmembrane segment at isoleucine 426–tyrosine 456 threads the bilayer. The GAS motif; ion selectivity filter signature appears at glycine 442–serine 444. The Cytoplasmic segment spans residues glutamate 457–cysteine 526. Residues serine 477 and serine 497 each carry the phosphoserine modification.

This sequence belongs to the amiloride-sensitive sodium channel (TC 1.A.6) family. ASIC1 subfamily. Homotrimer. Heterotrimer; with other ASIC proteins producing channel with different properties. Interacts with PICK1; regulates ASIC1 clustering in membranes. Interacts with STOM; alters heterotrimeric ASIC channels activity. Post-translationally, pH-gating could be regulated by serine proteases. In terms of processing, phosphorylation by PKA regulates interaction with PICK1 and subcellular localization. Phosphorylation by PKC may regulate the channel. In terms of tissue distribution, expressed in dorsal root ganglia and sciatic nerve (at protein level). Widely distributed throughout the brain. Expressed in olfactory bulb, neo and allocortical regions, dentate granule cells, pyramidal cells of CA1-CA3 subfields of the hippocampal formation, habenula, basolateral amygdaloid nuclei, and in the Purkinje and granule cells of the cerebellum. Diffusely detected over most other regions of the basal ganglia, including thalamic nuclei, substantia nigra, striatum and globus pallidus, hypothalamus, midbrain, pons, medulla and choroid plexus. As to expression, expressed only in dorsal root ganglion (DRG). Expressed exclusively in trigeminal ganglion and dorsal root ganglion.

It is found in the cell membrane. It localises to the postsynaptic cell membrane. The protein localises to the cell projection. Its subcellular location is the dendrite. It carries out the reaction Na(+)(in) = Na(+)(out). The catalysed reaction is Li(+)(in) = Li(+)(out). It catalyses the reaction K(+)(in) = K(+)(out). The enzyme catalyses Ca(2+)(in) = Ca(2+)(out). It carries out the reaction H(+)(in) = H(+)(out). Its activity is regulated as follows. Inhibited by the diuretic drug amiloride. External calcium is required to potentiate proton activation of ASIC1 at physiological concentrations, but at higher, non-physiological concentrations, it inhibits activation. Also potentiated by other multivalent cations like Mg(2+), Ba(2+). Activated by FMRFamide-related neuropeptides. Inhibited by anti-inflammatory drugs like salicylic acid. The spider venom psalmotoxin-1 specifically inhibits the ASIC1 homotrimer. The snake venom mambalgin-1, mambalgin-2 and mambalgin-3 inhibit the homotrimer of Asic1a (ASIC1 isoform 1). The snake venom mambalgin-1 and mambalgin-2 inhibit heterotrimers of Asic1a-Asic1b (ASIC1 isoform 1-ASIC1 isoform 3). Heterotrimer of Asic1a-Asic2a is inhibited by the snake venom mambalgin-1, mambalgin-2 and mambalgin-3. Heterotrimer of Asic1a-Asic2b is inhibited by the snake venom mambalgin-1 and mambalgin-2. The spider venom Pi-theraphotoxin-Hm3a inhibits the homotrimer of Asic1a (ASIC1 isoform 1). The spider venom Pi-theraphotoxin-Hm3a inhibits heterotrimers of Asic1a-Asic1b (ASIC1 isoform 1-ASIC1 isoform 3). The spider venom Pi-hexatoxin-Hi1a inhibits the ASIC1 homotrimer. Not inhibited by extracellular calcium. Its function is as follows. Forms voltage-independent, pH-gated trimeric sodium channels that act as postsynaptic excitatory receptors in the nervous system, playing a crucial role in regulating synaptic plasticity, learning, and memory. Upon extracellular pH drop this channel elicits transient, fast activating, and completely desensitizing inward currents. Displays high selectivity for sodium ions but can also permit the permeation of other cations. Regulates more or less directly intracellular calcium concentration and CaMKII phosphorylation, and thereby the density of dendritic spines. Modulates neuronal activity in the circuits underlying innate fear. In terms of biological role, permeable to other cations including calcium, lithium and potassium. Functionally, pH activation and steady-state inactivation are shifted to more acidic values. Forms channels that are not permeable to calcium as it discrimates stronger between monovalent cations. Has no pH-gated sodium channel activity per se but can associate with other ASICs and regulate their pH-sensitivity. This chain is Acid-sensing ion channel 1, found in Rattus norvegicus (Rat).